Reading from the N-terminus, the 38-residue chain is Kunitz-type trypsin inhibitor beta chain (38 aa).

Belongs to the protease inhibitor I3 (leguminous Kunitz-type inhibitor) family. Heterodimer of an alpha and a beta chain linked by a disulfide bond.

Functionally, inhibition of trypsin. This is Kunitz-type trypsin inhibitor beta chain from Neltuma juliflora (Mesquite).